The following is a 573-amino-acid chain: 2-succinyl-5-enolpyruvyl-6-hydroxy-3-cyclohexene-1-carboxylate synthase (573 aa).

The protein belongs to the TPP enzyme family. MenD subfamily. In terms of assembly, homodimer. The cofactor is Mg(2+). Mn(2+) is required as a cofactor. It depends on thiamine diphosphate as a cofactor.

The enzyme catalyses isochorismate + 2-oxoglutarate + H(+) = 5-enolpyruvoyl-6-hydroxy-2-succinyl-cyclohex-3-ene-1-carboxylate + CO2. Its pathway is quinol/quinone metabolism; 1,4-dihydroxy-2-naphthoate biosynthesis; 1,4-dihydroxy-2-naphthoate from chorismate: step 2/7. It participates in quinol/quinone metabolism; menaquinone biosynthesis. Its function is as follows. Catalyzes the thiamine diphosphate-dependent decarboxylation of 2-oxoglutarate and the subsequent addition of the resulting succinic semialdehyde-thiamine pyrophosphate anion to isochorismate to yield 2-succinyl-5-enolpyruvyl-6-hydroxy-3-cyclohexene-1-carboxylate (SEPHCHC). The sequence is that of 2-succinyl-5-enolpyruvyl-6-hydroxy-3-cyclohexene-1-carboxylate synthase from Shewanella baltica (strain OS185).